Reading from the N-terminus, the 121-residue chain is uncharacterized protein (121 aa).

Residues 1–19 (MKKFALATIFALATTSAFA) form the signal peptide.

The protein to E.coli YgiW.

The protein localises to the periplasm. This is an uncharacterized protein from Haemophilus influenzae (strain ATCC 51907 / DSM 11121 / KW20 / Rd).